We begin with the raw amino-acid sequence, 552 residues long: ATP synthase subunit alpha (552 aa).

173–180 lines the ATP pocket; sequence GDRQTGKT. The tract at residues 526–552 is disordered; it reads ASPLDPSAVRKESIPVHRAPARTDDEG. Residues 533–552 are compositionally biased toward basic and acidic residues; sequence AVRKESIPVHRAPARTDDEG.

Belongs to the ATPase alpha/beta chains family. In terms of assembly, F-type ATPases have 2 components, CF(1) - the catalytic core - and CF(0) - the membrane proton channel. CF(1) has five subunits: alpha(3), beta(3), gamma(1), delta(1), epsilon(1). CF(0) has three main subunits: a(1), b(2) and c(9-12). The alpha and beta chains form an alternating ring which encloses part of the gamma chain. CF(1) is attached to CF(0) by a central stalk formed by the gamma and epsilon chains, while a peripheral stalk is formed by the delta and b chains.

It is found in the cell membrane. The enzyme catalyses ATP + H2O + 4 H(+)(in) = ADP + phosphate + 5 H(+)(out). Produces ATP from ADP in the presence of a proton gradient across the membrane. The alpha chain is a regulatory subunit. The chain is ATP synthase subunit alpha from Frankia alni (strain DSM 45986 / CECT 9034 / ACN14a).